The sequence spans 289 residues: Phosphatidylserine decarboxylase proenzyme (289 aa).

Catalysis depends on charge relay system; for autoendoproteolytic cleavage activity residues Asp-92, His-149, and Ser-254. The active-site Schiff-base intermediate with substrate; via pyruvic acid; for decarboxylase activity is the Ser-254. Ser-254 carries the post-translational modification Pyruvic acid (Ser); by autocatalysis.

This sequence belongs to the phosphatidylserine decarboxylase family. PSD-B subfamily. Prokaryotic type I sub-subfamily. As to quaternary structure, heterodimer of a large membrane-associated beta subunit and a small pyruvoyl-containing alpha subunit. Pyruvate serves as cofactor. Is synthesized initially as an inactive proenzyme. Formation of the active enzyme involves a self-maturation process in which the active site pyruvoyl group is generated from an internal serine residue via an autocatalytic post-translational modification. Two non-identical subunits are generated from the proenzyme in this reaction, and the pyruvate is formed at the N-terminus of the alpha chain, which is derived from the carboxyl end of the proenzyme. The autoendoproteolytic cleavage occurs by a canonical serine protease mechanism, in which the side chain hydroxyl group of the serine supplies its oxygen atom to form the C-terminus of the beta chain, while the remainder of the serine residue undergoes an oxidative deamination to produce ammonia and the pyruvoyl prosthetic group on the alpha chain. During this reaction, the Ser that is part of the protease active site of the proenzyme becomes the pyruvoyl prosthetic group, which constitutes an essential element of the active site of the mature decarboxylase.

The protein resides in the cell membrane. The enzyme catalyses a 1,2-diacyl-sn-glycero-3-phospho-L-serine + H(+) = a 1,2-diacyl-sn-glycero-3-phosphoethanolamine + CO2. Its pathway is phospholipid metabolism; phosphatidylethanolamine biosynthesis; phosphatidylethanolamine from CDP-diacylglycerol: step 2/2. Catalyzes the formation of phosphatidylethanolamine (PtdEtn) from phosphatidylserine (PtdSer). This Pseudomonas aeruginosa (strain LESB58) protein is Phosphatidylserine decarboxylase proenzyme.